The following is a 589-amino-acid chain: Poly(3-hydroxyalkanoate) polymerase subunit PhaC (589 aa).

The tract at residues 1-23 is disordered; that stretch reads MATGKGAAASTQEGKSQPFKVTP. The active site involves C319.

Belongs to the PHA/PHB synthase family. Type I PhaC subfamily. In terms of assembly, monomer.

It localises to the cytoplasm. It carries out the reaction (3R)-3-hydroxybutanoyl-CoA + [(3R)-hydroxybutanoate](n) = [(3R)-hydroxybutanoate](n+1) + CoA. The protein operates within biopolymer metabolism; poly-(R)-3-hydroxybutanoate biosynthesis. Its function is as follows. Polymerizes (R)-3-hydroxybutyryl-CoA to create polyhydroxybutyrate (PHB) which consists of thousands of hydroxybutyrate molecules linked end to end. PHB serves as an intracellular energy reserve material when cells grow under conditions of nutrient limitation. This is Poly(3-hydroxyalkanoate) polymerase subunit PhaC from Cupriavidus necator (strain ATCC 17699 / DSM 428 / KCTC 22496 / NCIMB 10442 / H16 / Stanier 337) (Ralstonia eutropha).